A 226-amino-acid polypeptide reads, in one-letter code: ATP synthase F(0) complex subunit a (226 aa).

The next 6 membrane-spanning stretches (helical) occupy residues 12–32 (PTILGLPAAVPIILFPSLLIP), 68–88 (WSLMLISLITFIATTNLLGLL), 97–117 (QLSMNLAMAIPLWAGTVATGF), 138–158 (IPMLIIIETISLFIQPVALAV), 164–184 (ITAGHLLMHLIGAATMALSTI), and 200–222 (TTLEIAVALIQAYVFTLLVSLYL).

It belongs to the ATPase A chain family. In terms of assembly, component of the ATP synthase complex composed at least of ATP5F1A/subunit alpha, ATP5F1B/subunit beta, ATP5MC1/subunit c (homooctomer), MT-ATP6/subunit a, MT-ATP8/subunit 8, ATP5ME/subunit e, ATP5MF/subunit f, ATP5MG/subunit g, ATP5MK/subunit k, ATP5MJ/subunit j, ATP5F1C/subunit gamma, ATP5F1D/subunit delta, ATP5F1E/subunit epsilon, ATP5PF/subunit F6, ATP5PB/subunit b, ATP5PD/subunit d, ATP5PO/subunit OSCP. ATP synthase complex consists of a soluble F(1) head domain (subunits alpha(3) and beta(3)) - the catalytic core - and a membrane F(0) domain - the membrane proton channel (subunits c, a, 8, e, f, g, k and j). These two domains are linked by a central stalk (subunits gamma, delta, and epsilon) rotating inside the F1 region and a stationary peripheral stalk (subunits F6, b, d, and OSCP). Interacts with DNAJC30; interaction is direct.

The protein resides in the mitochondrion inner membrane. The catalysed reaction is H(+)(in) = H(+)(out). Its function is as follows. Subunit a, of the mitochondrial membrane ATP synthase complex (F(1)F(0) ATP synthase or Complex V) that produces ATP from ADP in the presence of a proton gradient across the membrane which is generated by electron transport complexes of the respiratory chain. ATP synthase complex consist of a soluble F(1) head domain - the catalytic core - and a membrane F(1) domain - the membrane proton channel. These two domains are linked by a central stalk rotating inside the F(1) region and a stationary peripheral stalk. During catalysis, ATP synthesis in the catalytic domain of F(1) is coupled via a rotary mechanism of the central stalk subunits to proton translocation. With the subunit c (ATP5MC1), forms the proton-conducting channel in the F(0) domain, that contains two crucial half-channels (inlet and outlet) that facilitate proton movement from the mitochondrial intermembrane space (IMS) into the matrix. Protons are taken up via the inlet half-channel and released through the outlet half-channel, following a Grotthuss mechanism. This chain is ATP synthase F(0) complex subunit a, found in Hylobates lar (Lar gibbon).